Here is a 492-residue protein sequence, read N- to C-terminus: Bifunctional protein GlmU (492 aa).

A pyrophosphorylase region spans residues methionine 1–arginine 241. Residues leucine 12 to glycine 15, lysine 26, glutamine 83, glycine 88 to threonine 89, serine 112 to aspartate 114, glycine 151, glutamate 166, asparagine 181, and asparagine 239 contribute to the UDP-N-acetyl-alpha-D-glucosamine site. Aspartate 114 provides a ligand contact to Mg(2+). Asparagine 239 lines the Mg(2+) pocket. Residues valine 242–alanine 262 form a linker region. The N-acetyltransferase stretch occupies residues glycine 263–aspartate 492. Residues arginine 344 and lysine 362 each contribute to the UDP-N-acetyl-alpha-D-glucosamine site. The active-site Proton acceptor is the histidine 374. Residues tyrosine 377 and asparagine 388 each contribute to the UDP-N-acetyl-alpha-D-glucosamine site. Acetyl-CoA-binding positions include alanine 391, asparagine 397–tyrosine 398, serine 416, and alanine 434. Positions valine 461–aspartate 492 are disordered. Residues threonine 479–aspartate 492 show a composition bias toward polar residues.

The protein in the N-terminal section; belongs to the N-acetylglucosamine-1-phosphate uridyltransferase family. In the C-terminal section; belongs to the transferase hexapeptide repeat family. In terms of assembly, homotrimer. It depends on Mg(2+) as a cofactor.

It is found in the cytoplasm. It carries out the reaction alpha-D-glucosamine 1-phosphate + acetyl-CoA = N-acetyl-alpha-D-glucosamine 1-phosphate + CoA + H(+). The catalysed reaction is N-acetyl-alpha-D-glucosamine 1-phosphate + UTP + H(+) = UDP-N-acetyl-alpha-D-glucosamine + diphosphate. The protein operates within nucleotide-sugar biosynthesis; UDP-N-acetyl-alpha-D-glucosamine biosynthesis; N-acetyl-alpha-D-glucosamine 1-phosphate from alpha-D-glucosamine 6-phosphate (route II): step 2/2. It functions in the pathway nucleotide-sugar biosynthesis; UDP-N-acetyl-alpha-D-glucosamine biosynthesis; UDP-N-acetyl-alpha-D-glucosamine from N-acetyl-alpha-D-glucosamine 1-phosphate: step 1/1. It participates in bacterial outer membrane biogenesis; LPS lipid A biosynthesis. Functionally, catalyzes the last two sequential reactions in the de novo biosynthetic pathway for UDP-N-acetylglucosamine (UDP-GlcNAc). The C-terminal domain catalyzes the transfer of acetyl group from acetyl coenzyme A to glucosamine-1-phosphate (GlcN-1-P) to produce N-acetylglucosamine-1-phosphate (GlcNAc-1-P), which is converted into UDP-GlcNAc by the transfer of uridine 5-monophosphate (from uridine 5-triphosphate), a reaction catalyzed by the N-terminal domain. This chain is Bifunctional protein GlmU, found in Mycobacterium leprae (strain Br4923).